The sequence spans 370 residues: Protein PELPK1 (370 aa).

The signal sequence occupies residues 1–34 (MALMKKSLSAALLSSPLLIICLIALLADPFSVGA). A run of 52 repeats spans residues 43–47 (PEIPK), 49–53 (PELPK), 54–58 (FEVPK), 60–64 (PEFPK), 65–69 (PELPK), 71–75 (PEFPK), 76–80 (PELPK), 82–86 (PEIPK), 87–91 (PELPK), 93–97 (PEIPK), 98–102 (PEETK), 104–108 (PDIPK), 109–113 (LELPK), 115–119 (PEIPK), 120–124 (PELPK), 126–130 (PEIPK), 131–135 (PELPK), 137–141 (PEIQK), 142–146 (PELPK), 148–152 (PEIPK), 153–157 (PELPK), 159–163 (PEIPK), 164–168 (PDLPK), 175–179 (PEVPK), 186–190 (PEAPK), 192–196 (PEIPK), 197–201 (PELPK), 203–207 (PEVPK), 214–218 (PEIQK), 219–223 (PELPK), 225–229 (PELPK), 231–235 (PEIQK), 236–240 (PELPK), 242–246 (PEVPK), 247–251 (LEAPK), 253–257 (PEIQK), 258–262 (PELPK), 264–268 (PELPK), 270–274 (PEIQK), 275–279 (PELPK), 281–285 (PEIQK), 286–290 (PELPK), 292–296 (PEVPK), 303–307 (PEVPK), 314–318 (PEIPK), 319–323 (PELPK), 325–329 (PEVPK), 330–334 (PELPK), 336–340 (PEITK), 344–348 (PEIPK), 355–359 (PQLPK), and 361–365 (PEFPK). Residues 43-365 (PEIPKLPELP…QLPKLPEFPK (323 aa)) are 52 X 5 AA tandem repeat of P-[DEGQ]-[AEFLIV]-[QPT]-K. Residues 65–223 (PELPKLPEFP…PEIQKPELPK (159 aa)) show a composition bias toward basic and acidic residues. The segment at 65 to 370 (PELPKLPEFP…PEFPKVPGTP (306 aa)) is disordered. The segment covering 232–262 (EIQKPELPKLPEVPKLEAPKVPEIQKPELPK) has biased composition (basic and acidic residues). 2 stretches are compositionally biased toward basic and acidic residues: residues 271 to 296 (EIQK…EVPK) and 306 to 334 (PKSE…ELPK).

The protein resides in the secreted. The protein localises to the cell wall. Functionally, positive regulator of germination and plant growth. The polypeptide is Protein PELPK1 (Arabidopsis thaliana (Mouse-ear cress)).